The chain runs to 137 residues: Phosphoribosyl-AMP cyclohydrolase (137 aa).

Residue D84 participates in Mg(2+) binding. C85 contacts Zn(2+). Mg(2+) is bound by residues D86 and D88. C101 and C108 together coordinate Zn(2+).

The protein belongs to the PRA-CH family. As to quaternary structure, homodimer. Requires Mg(2+) as cofactor. Zn(2+) is required as a cofactor.

The protein localises to the cytoplasm. The enzyme catalyses 1-(5-phospho-beta-D-ribosyl)-5'-AMP + H2O = 1-(5-phospho-beta-D-ribosyl)-5-[(5-phospho-beta-D-ribosylamino)methylideneamino]imidazole-4-carboxamide. It participates in amino-acid biosynthesis; L-histidine biosynthesis; L-histidine from 5-phospho-alpha-D-ribose 1-diphosphate: step 3/9. In terms of biological role, catalyzes the hydrolysis of the adenine ring of phosphoribosyl-AMP. This is Phosphoribosyl-AMP cyclohydrolase from Chlorobium limicola (strain DSM 245 / NBRC 103803 / 6330).